Consider the following 190-residue polypeptide: dITP/XTP pyrophosphatase (190 aa).

7 to 12 (THNPNK) is a substrate binding site. Mg(2+)-binding residues include Glu39 and Asp68. The Proton acceptor role is filled by Asp68. Residues Thr69, 148 to 151 (FGYD), Lys171, and 176 to 177 (HR) contribute to the substrate site.

Belongs to the HAM1 NTPase family. In terms of assembly, homodimer. Requires Mg(2+) as cofactor.

The catalysed reaction is XTP + H2O = XMP + diphosphate + H(+). It carries out the reaction dITP + H2O = dIMP + diphosphate + H(+). It catalyses the reaction ITP + H2O = IMP + diphosphate + H(+). Functionally, pyrophosphatase that catalyzes the hydrolysis of nucleoside triphosphates to their monophosphate derivatives, with a high preference for the non-canonical purine nucleotides XTP (xanthosine triphosphate), dITP (deoxyinosine triphosphate) and ITP. Seems to function as a house-cleaning enzyme that removes non-canonical purine nucleotides from the nucleotide pool, thus preventing their incorporation into DNA/RNA and avoiding chromosomal lesions. In Christiangramia forsetii (strain DSM 17595 / CGMCC 1.15422 / KT0803) (Gramella forsetii), this protein is dITP/XTP pyrophosphatase.